A 3084-amino-acid chain; its full sequence is Highly reducing polyketide synthase sdnO (3084 aa).

The Ketosynthase family 3 (KS3) domain occupies 4 to 430 (PIPLAVVGIA…GTNAHAVLEK (427 aa)). Catalysis depends on for beta-ketoacyl synthase activity residues cysteine 178, histidine 313, and histidine 353. Residues 541 to 841 (FIFTGQGAQW…LAGPLRQSVA (301 aa)) form a malonyl-CoA:ACP transacylase (MAT) domain region. The For malonyltransferase activity role is filled by serine 632. The segment at 931–1071 (HDLLGLRMTD…GSVLIDLVSS (141 aa)) is N-terminal hotdog fold. A dehydratase (DH) domain region spans residues 931–1243 (HDLLGLRMTD…RSAEADMLVF (313 aa)). The region spanning 931-1275 (HDLLGLRMTD…LRSLAALDGA (345 aa)) is the PKS/mFAS DH domain. Residue histidine 963 is the Proton acceptor; for dehydratase activity of the active site. Positions 1099–1275 (LQPGEDIPPS…LRSLAALDGA (177 aa)) are C-terminal hotdog fold. Aspartate 1177 serves as the catalytic Proton donor; for dehydratase activity. The interval 1733-2045 (GTAHAATFVE…RHENMTKYVV (313 aa)) is enoylreductase (ER) domain. Residues 2069 to 2252 (ATYVVAGGLG…YMALNIGLIE (184 aa)) form a catalytic ketoreductase (KRc) domain region. The region spanning 2363 to 2440 (DIEAFAARAI…ALARKVTLRS (78 aa)) is the Carrier domain. An O-(pantetheine 4'-phosphoryl)serine modification is found at serine 2400. The tract at residues 2445-2501 (GGAGGDASSTGNSESMARTPSDSSTVPTSIPATPSRSPSREPPAKETLTKSQQHLPI) is disordered. Polar residues predominate over residues 2456 to 2481 (NSESMARTPSDSSTVPTSIPATPSRS). Residues 2482–2492 (PSREPPAKETL) are compositionally biased toward basic and acidic residues. Residues 2864-3084 (HFYSQLNRAF…LGVVRRVVEG (221 aa)) form a choline/carnitine acyltransferase domain region.

Its pathway is antibiotic biosynthesis. Highly reducing polyketide synthase; part of the gene cluster that mediates the biosynthesis of sordarin and hypoxysordarin, glycoside antibiotics with a unique tetracyclic diterpene aglycone structure. First, the geranylgeranyl diphosphate synthase sdnC constructs GGDP from farnesyl diphosphate and isopentenyl diphosphate. The diterpene cyclase sdnA then catalyzes the cyclization of GGDP to afford cycloaraneosene. Cycloaraneosene is then hydroxylated four times by the putative cytochrome P450 monooxygenases sdnB, sdnE, sdnF and sdnH to give a hydroxylated cycloaraneosene derivative such as cycloaraneosene-8,9,13,19-tetraol. Although the order of the hydroxylations is unclear, at least C8, C9 and C13 of the cycloaraneosene skeleton are hydroxylated before the sordaricin formation. Dehydration of the 13-hydroxy group of the hydroxylated cycloaraneosene derivative might be catalyzed by an unassigned hypothetical protein such as sdnG and sdnP to construct the cyclopentadiene moiety. The FAD-dependent oxidoreductase sdnN is proposed to catalyze the oxidation at C9 of the hydroxylated cycloaraneosene derivative and also catalyze the Baeyer-Villiger oxidation to give the lactone intermediate. The presumed lactone intermediate would be hydrolyzed to give an acrolein moiety and a carboxylate moiety. Then, [4+2]cycloaddition would occur between the acrolein moiety and the cyclopentadiene moiety to give sordaricin. SdnN might also be involved in the [4+2]cycloaddition after the hypothesized oxidation to accommodate the oxidized product and prompt the [4+2]cycloaddition. GDP-6-deoxy-D-altrose may be biosynthesized from GDP-D-mannose by the putative GDP-mannose-4,6-dehydratase sdnI and the short-chain dehydrogenase sdnK. The glycosyltransferase sdnJ catalyzes the attachment of 6-deoxy-D-altrose onto the 19-hydroxy group of sordaricin to give 4'-O-demethylsordarin. The methyltransferase sdnD would complete the biosynthesis of sordarin. Sordarin can be further modified into hypoxysordarin. The unique acyl chain at the 3'-hydroxy group of hypoxysordarin would be constructed by an iterative type I PKS sdnO and the trans-acting polyketide methyltransferase sdnL. SdnL would be responsible for the introduction of an alpha-methyl group of the polyketide chain. Alternatively, the putative beta-lactamase-like sdnR might be responsible for the cleavage and transfer of the polyketide chain from the PKS sdnO to sordarin. Two putative cytochrome P450 monooxygenases, sdnQ and sdnT, might catalyze the epoxidations of the polyketide chain to complete the biosynthesis of hypoxysordarin. Transcriptional regulators sdnM and sdnS are presumably encoded for the transcriptional regulation of the expression of the sdn gene cluster. This Sordaria araneosa (Pleurage araneosa) protein is Highly reducing polyketide synthase sdnO.